A 318-amino-acid chain; its full sequence is Methionyl-tRNA formyltransferase (318 aa).

110-113 (SLLP) serves as a coordination point for (6S)-5,6,7,8-tetrahydrofolate.

Belongs to the Fmt family.

The catalysed reaction is L-methionyl-tRNA(fMet) + (6R)-10-formyltetrahydrofolate = N-formyl-L-methionyl-tRNA(fMet) + (6S)-5,6,7,8-tetrahydrofolate + H(+). Attaches a formyl group to the free amino group of methionyl-tRNA(fMet). The formyl group appears to play a dual role in the initiator identity of N-formylmethionyl-tRNA by promoting its recognition by IF2 and preventing the misappropriation of this tRNA by the elongation apparatus. This chain is Methionyl-tRNA formyltransferase, found in Latilactobacillus sakei subsp. sakei (strain 23K) (Lactobacillus sakei subsp. sakei).